The primary structure comprises 311 residues: Glycine-betaine-binding protein (311 aa).

An N-terminal signal peptide occupies residues 1–23 (MNRLIRSLCLACAGLFAAGLAQA).

The protein belongs to the OsmX family.

It localises to the periplasm. In terms of biological role, binds glycine-betaine. In Pseudomonas aeruginosa (strain ATCC 15692 / DSM 22644 / CIP 104116 / JCM 14847 / LMG 12228 / 1C / PRS 101 / PAO1), this protein is Glycine-betaine-binding protein.